Reading from the N-terminus, the 334-residue chain is Peroxidase 65 (334 aa).

Positions 1–28 are cleaved as a signal peptide; it reads MSNMQFSRGFNPFVILFCLAVVAPIISA. Disulfide bonds link cysteine 42/cysteine 123, cysteine 75/cysteine 80, cysteine 129/cysteine 326, and cysteine 208/cysteine 236. Histidine 73 serves as the catalytic Proton acceptor. Ca(2+)-binding residues include aspartate 74, glycine 79, aspartate 81, and serine 83. Position 171 (proline 171) interacts with substrate. N-linked (GlcNAc...) asparagine glycosylation is present at asparagine 174. Heme b is bound at residue histidine 201. Threonine 202 contributes to the Ca(2+) binding site. A glycan (N-linked (GlcNAc...) asparagine) is linked at asparagine 238. Ca(2+)-binding residues include aspartate 250, threonine 253, and aspartate 258. Residues asparagine 282 and asparagine 294 are each glycosylated (N-linked (GlcNAc...) asparagine).

Belongs to the peroxidase family. Classical plant (class III) peroxidase subfamily. Heme b serves as cofactor. It depends on Ca(2+) as a cofactor.

The protein resides in the secreted. The catalysed reaction is 2 a phenolic donor + H2O2 = 2 a phenolic radical donor + 2 H2O. In terms of biological role, removal of H(2)O(2), oxidation of toxic reductants, biosynthesis and degradation of lignin, suberization, auxin catabolism, response to environmental stresses such as wounding, pathogen attack and oxidative stress. These functions might be dependent on each isozyme/isoform in each plant tissue. This chain is Peroxidase 65 (PER65), found in Arabidopsis thaliana (Mouse-ear cress).